The chain runs to 239 residues: Octanoyltransferase (239 aa).

Residues 59 to 239 enclose the BPL/LPL catalytic domain; that stretch reads PFSPQAVWLL…KRRFKLNWEK (181 aa). Substrate-binding positions include 101-108, 168-170, and 181-183; these read RGGEVTHH, SIG, and GFS. The active-site Acyl-thioester intermediate is Cys199.

Belongs to the LipB family.

It localises to the cytoplasm. The catalysed reaction is octanoyl-[ACP] + L-lysyl-[protein] = N(6)-octanoyl-L-lysyl-[protein] + holo-[ACP] + H(+). Its pathway is protein modification; protein lipoylation via endogenous pathway; protein N(6)-(lipoyl)lysine from octanoyl-[acyl-carrier-protein]: step 1/2. In terms of biological role, catalyzes the transfer of endogenously produced octanoic acid from octanoyl-acyl-carrier-protein onto the lipoyl domains of lipoate-dependent enzymes. Lipoyl-ACP can also act as a substrate although octanoyl-ACP is likely to be the physiological substrate. The chain is Octanoyltransferase from Prochlorococcus marinus (strain NATL2A).